Here is a 439-residue protein sequence, read N- to C-terminus: Dolichyl-diphosphooligosaccharide--protein glycosyltransferase 48 kDa subunit (439 aa).

The first 26 residues, 1 to 26, serve as a signal peptide directing secretion; it reads MATRAARVWSGWWLLLLPLLGLAGAS. The Lumenal portion of the chain corresponds to 27–409; that stretch reads GPRTLVLLDN…QYERFIPSAY (383 aa). The chain crosses the membrane as a helical span at residues 410 to 430; sequence PYYASAFSMMLGLFIFSVVFL. At 431–439 the chain is on the cytoplasmic side; the sequence is HMKEKEKSD.

It belongs to the DDOST 48 kDa subunit family. As to quaternary structure, component of the oligosaccharyltransferase (OST) complex. OST exists in two different complex forms which contain common core subunits RPN1, RPN2, OST48, OST4, DAD1 and TMEM258, either STT3A or STT3B as catalytic subunits, and form-specific accessory subunits. STT3A complex assembly occurs through the formation of 3 subcomplexes. Subcomplex 1 contains RPN1 and TMEM258, subcomplex 2 contains the STT3A-specific subunits STT3A, DC2/OSTC, and KCP2 as well as the core subunit OST4, and subcomplex 3 contains RPN2, DAD1, and OST48. The STT3A complex can form stable complexes with the Sec61 complex or with both the Sec61 and TRAP complexes. Interacts with SMIM22.

It is found in the endoplasmic reticulum membrane. It participates in protein modification; protein glycosylation. Subunit of the oligosaccharyl transferase (OST) complex that catalyzes the initial transfer of a defined glycan (Glc(3)Man(9)GlcNAc(2) in eukaryotes) from the lipid carrier dolichol-pyrophosphate to an asparagine residue within an Asn-X-Ser/Thr consensus motif in nascent polypeptide chains, the first step in protein N-glycosylation. N-glycosylation occurs cotranslationally and the complex associates with the Sec61 complex at the channel-forming translocon complex that mediates protein translocation across the endoplasmic reticulum (ER). All subunits are required for a maximal enzyme activity. Required for the assembly of both SST3A- and SS3B-containing OST complexes. This is Dolichyl-diphosphooligosaccharide--protein glycosyltransferase 48 kDa subunit from Bos taurus (Bovine).